A 526-amino-acid polypeptide reads, in one-letter code: MVEEHKNKKRRQEDGPADVPEKKVKVSKSEKKDKKEKKEKKEKKEKKEKKEKKEKKEKKEKKKKYEHTATISGSAQSSQGYTQSESLTNLPQSEIDSFLATNEVTIEDPHSLNLRPLLSFDQIQLNSKISAVVNKFPTPTPIQSVAWPYLLSGKDVIGVAETGSGKTFAFGVPAINNILTLGKSGLSVLCISPTRELASQIYDNLVDLTSNTNVKCVCVYGGVPKHDQVKNLKNANVVVATPGRLLDLIEDGAVNLGTVDYLVLDEADRMLETGFEDAIKAIIGGTKKENRQTLMFTATWPQEVRKLASTFMNQPVKVSIGDRDELAANKRITQIVEVIEPFDKEKKLLGLLRQYQSGSKKNDKVLIFALYKKEATRIEGLLRRNSYNVAAIHGDLSQQQRTNALNSFKKGESSLLLATDVAARGLDIPNVKVVINLTFPLTVEDYVHRIGRTGRAGQTGTAHTLFTEHEKHLSGALMNILRGANQPVPDELLKFGGHTKKKAHSAYGAFFKDVDMTKTAKKIKFD.

Over residues 1-33 (MVEEHKNKKRRQEDGPADVPEKKVKVSKSEKKD) the composition is skewed to basic and acidic residues. A disordered region spans residues 1–86 (MVEEHKNKKR…SSQGYTQSES (86 aa)). Positions 34-65 (KKEKKEKKEKKEKKEKKEKKEKKEKKEKKKKY) are enriched in basic residues. A compositionally biased stretch (polar residues) spans 69–86 (ATISGSAQSSQGYTQSES). The short motif at 118–144 (LSFDQIQLNSKISAVVNKFPTPTPIQS) is the Q motif element. The region spanning 147–318 (WPYLLSGKDV…STFMNQPVKV (172 aa)) is the Helicase ATP-binding domain. 160–167 (AETGSGKT) is an ATP binding site. The short motif at 265–268 (DEAD) is the DEAD box element. A Helicase C-terminal domain is found at 334–496 (QIVEVIEPFD…PVPDELLKFG (163 aa)).

This sequence belongs to the DEAD box helicase family. DDX5/DBP2 subfamily.

It localises to the nucleus. The protein resides in the nucleolus. It catalyses the reaction ATP + H2O = ADP + phosphate + H(+). In terms of biological role, ATP-dependent RNA helicase required for 60S ribosomal subunit synthesis. Involved in efficient pre-rRNA processing, predominantly at site A3, which is necessary for the normal formation of 25S and 5.8S rRNAs. The protein is ATP-dependent RNA helicase DBP3 (DBP3) of Scheffersomyces stipitis (strain ATCC 58785 / CBS 6054 / NBRC 10063 / NRRL Y-11545) (Yeast).